A 467-amino-acid polypeptide reads, in one-letter code: ATP synthase subunit beta (467 aa).

150-157 (GGAGVGKT) serves as a coordination point for ATP.

The protein belongs to the ATPase alpha/beta chains family. In terms of assembly, F-type ATPases have 2 components, CF(1) - the catalytic core - and CF(0) - the membrane proton channel. CF(1) has five subunits: alpha(3), beta(3), gamma(1), delta(1), epsilon(1). CF(0) has three main subunits: a(1), b(2) and c(9-12). The alpha and beta chains form an alternating ring which encloses part of the gamma chain. CF(1) is attached to CF(0) by a central stalk formed by the gamma and epsilon chains, while a peripheral stalk is formed by the delta and b chains.

The protein localises to the cell inner membrane. It carries out the reaction ATP + H2O + 4 H(+)(in) = ADP + phosphate + 5 H(+)(out). Its function is as follows. Produces ATP from ADP in the presence of a proton gradient across the membrane. The catalytic sites are hosted primarily by the beta subunits. The sequence is that of ATP synthase subunit beta from Aliivibrio fischeri (strain MJ11) (Vibrio fischeri).